We begin with the raw amino-acid sequence, 324 residues long: Beta-ketoacyl-[acyl-carrier-protein] synthase III (324 aa).

Catalysis depends on residues Cys114 and His251. An ACP-binding region spans residues 252 to 256 (QANLR). Residue Asn281 is part of the active site.

The protein belongs to the thiolase-like superfamily. FabH family. In terms of assembly, homodimer.

The protein localises to the cytoplasm. The enzyme catalyses malonyl-[ACP] + acetyl-CoA + H(+) = 3-oxobutanoyl-[ACP] + CO2 + CoA. The protein operates within lipid metabolism; fatty acid biosynthesis. Catalyzes the condensation reaction of fatty acid synthesis by the addition to an acyl acceptor of two carbons from malonyl-ACP. Catalyzes the first condensation reaction which initiates fatty acid synthesis and may therefore play a role in governing the total rate of fatty acid production. Possesses both acetoacetyl-ACP synthase and acetyl transacylase activities. Its substrate specificity determines the biosynthesis of branched-chain and/or straight-chain of fatty acids. The sequence is that of Beta-ketoacyl-[acyl-carrier-protein] synthase III from Dinoroseobacter shibae (strain DSM 16493 / NCIMB 14021 / DFL 12).